A 395-amino-acid chain; its full sequence is Phosphopentomutase (395 aa).

Positions 10, 294, 299, 335, 336, and 347 each coordinate Mn(2+).

This sequence belongs to the phosphopentomutase family. The cofactor is Mn(2+).

It localises to the cytoplasm. The enzyme catalyses 2-deoxy-alpha-D-ribose 1-phosphate = 2-deoxy-D-ribose 5-phosphate. It carries out the reaction alpha-D-ribose 1-phosphate = D-ribose 5-phosphate. Its pathway is carbohydrate degradation; 2-deoxy-D-ribose 1-phosphate degradation; D-glyceraldehyde 3-phosphate and acetaldehyde from 2-deoxy-alpha-D-ribose 1-phosphate: step 1/2. In terms of biological role, isomerase that catalyzes the conversion of deoxy-ribose 1-phosphate (dRib-1-P) and ribose 1-phosphate (Rib-1-P) to deoxy-ribose 5-phosphate (dRib-5-P) and ribose 5-phosphate (Rib-5-P), respectively. In Actinobacillus succinogenes (strain ATCC 55618 / DSM 22257 / CCUG 43843 / 130Z), this protein is Phosphopentomutase.